Reading from the N-terminus, the 357-residue chain is CD4+ T-cell-stimulating antigen (357 aa).

The N-terminal stretch at 1 to 22 (MKKRTFALALSMIIASGVILGA) is a signal peptide. Cys-23 is lipidated: N-palmitoyl cysteine. Cys-23 carries the S-diacylglycerol cysteine lipid modification.

This sequence belongs to the BMP lipoprotein family.

Its subcellular location is the cell membrane. The polypeptide is CD4+ T-cell-stimulating antigen (tcsA) (Listeria monocytogenes serovar 1/2a (strain ATCC BAA-679 / EGD-e)).